We begin with the raw amino-acid sequence, 971 residues long: Serine/threonine-protein kinase CLA4 (971 aa).

The segment at 1–40 (MTSIYTSDLKNHRRAPPPPNGAAGSGSGSGSGSGSGSGSL) is disordered. Gly residues predominate over residues 23 to 37 (AGSGSGSGSGSGSGS). A PH domain is found at 67–178 (SKRQSGWVHV…WLDAFTTKCP (112 aa)). The disordered stretch occupies residues 201–221 (LTNGSLNGNSSSSPTSGLLSS). Residues 231–244 (VSGPINFTHKVHVG) enclose the CRIB domain. Disordered stretches follow at residues 292 to 517 (GGNS…KIHP) and 554 to 653 (SKKS…QLKK). Low complexity-rich tracts occupy residues 307–326 (NSKT…TKNN) and 365–404 (LNGS…PLNN). Polar residues predominate over residues 423 to 433 (SGTSSDTYSNK). A compositionally biased stretch (basic and acidic residues) spans 434 to 448 (NHQDRSGYEQQRQQR). The span at 449–482 (TDSSQQQQQQKQHQYQQKSQQQQQQPQQPLSSHQ) shows a compositional bias: low complexity. Pro residues predominate over residues 491 to 500 (QVPPTLPSSG). Residues 554 to 578 (SKKSQQQLASKQPSPPSSQQQQQKP) show a composition bias toward low complexity. Positions 617-630 (NETSGVSKTPSPTD) are enriched in polar residues. Residues 680 to 935 (FRIVEKAGQG…TDELLEHSFI (256 aa)) form the Protein kinase domain. ATP is bound by residues 686-694 (AGQGASGNV) and Lys710. The Proton acceptor role is filled by Asp803.

Belongs to the protein kinase superfamily. STE Ser/Thr protein kinase family. STE20 subfamily.

The catalysed reaction is L-seryl-[protein] + ATP = O-phospho-L-seryl-[protein] + ADP + H(+). The enzyme catalyses L-threonyl-[protein] + ATP = O-phospho-L-threonyl-[protein] + ADP + H(+). Its function is as follows. Essential for virulence and morphological switching (hyphal formation) of C.albicans. This Candida albicans (Yeast) protein is Serine/threonine-protein kinase CLA4 (CLA4).